The chain runs to 149 residues: Large ribosomal subunit protein bL9 (149 aa).

This sequence belongs to the bacterial ribosomal protein bL9 family.

Binds to the 23S rRNA. This Christiangramia forsetii (strain DSM 17595 / CGMCC 1.15422 / KT0803) (Gramella forsetii) protein is Large ribosomal subunit protein bL9.